The primary structure comprises 555 residues: DNA repair and recombination protein rhm52 (555 aa).

Residues 148–152 (KRALR) mediate DNA binding. Disordered regions lie at residues 197–232 (VVAEPRLPPVKPEPSNTASAAPHPPLPPLPEADSFD) and 251–555 (HPDE…MKLN). Low complexity predominate over residues 260 to 276 (NSHASGSSGNTGASTTN). Polar residues-rich tracts occupy residues 283–300 (SGNQSNQQRPMQPSSRMN) and 312–334 (TPNHQINRSGPQNGSINNQQNNH). Low complexity-rich tracts occupy residues 354 to 375 (NNNNTSNGTGPHQRPLGNGPQQ) and 382 to 404 (NGAATAPSGAEPVAFFSARAVAR). Polar residues predominate over residues 468-478 (DNPSNNAGNGV). The segment covering 479–490 (QNQPQKPQPSQQ) has biased composition (low complexity). Over residues 491–500 (RGSILNPQFD) the composition is skewed to polar residues. A compositionally biased stretch (low complexity) spans 536–547 (PNGTSNGNGTPG).

It belongs to the RAD52 family. Part of a complex that includes RAD51, RAD52 and RAD59.

The protein resides in the nucleus. Functionally, involved in DNA double-strand break (DSB) repair and recombination. Promotes the annealing of complementary single-stranded DNA and by stimulation of the RAD51 recombinase. This chain is DNA repair and recombination protein rhm52 (RHM52), found in Pyricularia oryzae (strain 70-15 / ATCC MYA-4617 / FGSC 8958) (Rice blast fungus).